The sequence spans 238 residues: Probable rhamnogalacturonate lyase B (238 aa).

Residues Met-1–Ala-19 form the signal peptide. N-linked (GlcNAc...) asparagine glycosylation is found at Asn-27, Asn-110, and Asn-143.

Belongs to the polysaccharide lyase 4 family.

The protein resides in the secreted. The catalysed reaction is Endotype eliminative cleavage of L-alpha-rhamnopyranosyl-(1-&gt;4)-alpha-D-galactopyranosyluronic acid bonds of rhamnogalacturonan I domains in ramified hairy regions of pectin leaving L-rhamnopyranose at the reducing end and 4-deoxy-4,5-unsaturated D-galactopyranosyluronic acid at the non-reducing end.. Its function is as follows. Pectinolytic enzymes consist of four classes of enzymes: pectin lyase, polygalacturonase, pectin methylesterase and rhamnogalacturonase. Degrades the rhamnogalacturonan I (RG-I) backbone of pectin. This Aspergillus oryzae (strain ATCC 42149 / RIB 40) (Yellow koji mold) protein is Probable rhamnogalacturonate lyase B (rglB).